Consider the following 62-residue polypeptide: Large ribosomal subunit protein bL28 (62 aa).

The disordered stretch occupies residues 1 to 27 (MARKCVVTGRQTRSGNQRSHAMNSNKR). Positions 9-26 (GRQTRSGNQRSHAMNSNK) are enriched in polar residues.

Belongs to the bacterial ribosomal protein bL28 family.

This chain is Large ribosomal subunit protein bL28, found in Oceanobacillus iheyensis (strain DSM 14371 / CIP 107618 / JCM 11309 / KCTC 3954 / HTE831).